A 417-amino-acid polypeptide reads, in one-letter code: Serpin H1 (417 aa).

Residues 1 to 17 (MRSLLLGTLCLLAVALA) form the signal peptide. The residue at position 93 (Lys93) is an N6-succinyllysine. Residues Asn119 and Asn124 are each glycosylated (N-linked (GlcNAc...) asparagine). Ser140 bears the Phosphoserine mark. Lys206 is subject to N6-acetyllysine. N6-succinyllysine is present on Lys295. The residue at position 318 (Lys318) is an N6-acetyllysine. Asn394 carries N-linked (GlcNAc...) asparagine glycosylation. The Prevents secretion from ER signature appears at 414–417 (RDEL).

It belongs to the serpin family.

The protein resides in the endoplasmic reticulum lumen. Functionally, binds specifically to collagen. Could be involved as a chaperone in the biosynthetic pathway of collagen. This is Serpin H1 (Serpinh1) from Mus musculus (Mouse).